The primary structure comprises 227 residues: C4-dicarboxylate TRAP transporter small permease protein DctQ (227 aa).

The Cytoplasmic portion of the chain corresponds to 1 to 7 (MLRILDR). The helical transmembrane segment at 8-28 (AEEVLIAALIATATVLIFVSV) threads the bilayer. Topologically, residues 29–67 (THRFTLGFVADFVGFFRGHGMTGAAAAAKSLYTTLRGIN) are periplasmic. Residues 68 to 88 (LVWAQELCIILFVWMAKFGAA) form a helical membrane-spanning segment. Over 89 to 112 (YGVRTGIHVGIDVLINRLDAPKRR) the chain is Cytoplasmic. Residues 113–133 (FFILLGLGAGALFTGIIATLG) form a helical membrane-spanning segment. Over 134–149 (ANFVLHMYHASSTSPD) the chain is Periplasmic. Residues 150 to 170 (LELPMWLVYLAIPMGSSLMCF) form a helical membrane-spanning segment. The Cytoplasmic portion of the chain corresponds to 171–227 (RFLQVAFGFARTGELPHHDHGHVDGVDTENEGIDAEGDVLLHSPLTPRDLVEKPKDN).

The protein belongs to the TRAP transporter small permease family. As to quaternary structure, the complex comprises the extracytoplasmic solute receptor protein DctP, and the two transmembrane proteins DctQ and DctM.

Its subcellular location is the cell inner membrane. Part of the tripartite ATP-independent periplasmic (TRAP) transport system DctPQM involved in C4-dicarboxylates uptake. The polypeptide is C4-dicarboxylate TRAP transporter small permease protein DctQ (Rhodobacter capsulatus (Rhodopseudomonas capsulata)).